We begin with the raw amino-acid sequence, 378 residues long: S-(hydroxymethyl)glutathione dehydrogenase (378 aa).

Zn(2+) contacts are provided by C49, H71, C101, C104, C107, C115, and C178.

The protein belongs to the zinc-containing alcohol dehydrogenase family. Class-III subfamily. In terms of assembly, homodimer. The cofactor is Zn(2+).

The protein resides in the cytoplasm. It carries out the reaction S-(hydroxymethyl)glutathione + NADP(+) = S-formylglutathione + NADPH + H(+). The catalysed reaction is S-(hydroxymethyl)glutathione + NAD(+) = S-formylglutathione + NADH + H(+). It catalyses the reaction a primary alcohol + NAD(+) = an aldehyde + NADH + H(+). The enzyme catalyses a secondary alcohol + NAD(+) = a ketone + NADH + H(+). It carries out the reaction S-nitrosoglutathione + NADH + H(+) = S-(hydroxysulfenamide)glutathione + NAD(+). Its function is as follows. Has high formaldehyde dehydrogenase activity in the presence of glutathione and catalyzes the oxidation of normal alcohols in a reaction that is not GSH-dependent. In addition, hemithiolacetals other than those formed from GSH, including omega-thiol fatty acids, also are substrates. Also acts as a S-nitroso-glutathione reductase by catalyzing the NADH-dependent reduction of S-nitrosoglutathione. This Haemophilus influenzae (strain ATCC 51907 / DSM 11121 / KW20 / Rd) protein is S-(hydroxymethyl)glutathione dehydrogenase (frmA).